Reading from the N-terminus, the 60-residue chain is Small ribosomal subunit protein eS31 (60 aa).

The Zn(2+) site is built by Cys-27, Cys-30, Cys-45, and Cys-48. A C4-type zinc finger spans residues 27-48 (CPRCGPGVFMAEHLNRYACGKC).

This sequence belongs to the eukaryotic ribosomal protein eS31 family. As to quaternary structure, part of the 30S ribosomal subunit. It depends on Zn(2+) as a cofactor.

This Methanocaldococcus jannaschii (strain ATCC 43067 / DSM 2661 / JAL-1 / JCM 10045 / NBRC 100440) (Methanococcus jannaschii) protein is Small ribosomal subunit protein eS31.